The sequence spans 129 residues: Ribosome-binding factor A (129 aa).

It belongs to the RbfA family. Monomer. Binds 30S ribosomal subunits, but not 50S ribosomal subunits or 70S ribosomes.

It is found in the cytoplasm. Its function is as follows. One of several proteins that assist in the late maturation steps of the functional core of the 30S ribosomal subunit. Associates with free 30S ribosomal subunits (but not with 30S subunits that are part of 70S ribosomes or polysomes). Required for efficient processing of 16S rRNA. May interact with the 5'-terminal helix region of 16S rRNA. This Gloeobacter violaceus (strain ATCC 29082 / PCC 7421) protein is Ribosome-binding factor A.